Consider the following 86-residue polypeptide: uncharacterized protein (86 aa).

This is an uncharacterized protein from Bacillus subtilis (strain 168).